Reading from the N-terminus, the 1200-residue chain is NACHT, LRR and PYD domains-containing protein 5 (1200 aa).

In terms of domain architecture, Pyrin spans 57-148; that stretch reads SLTFSSYGLQ…SEKARDDMKR (92 aa). The segment covering 142–152 has biased composition (basic and acidic residues); it reads ARDDMKRHSPE. The segment at 142–232 is disordered; that stretch reads ARDDMKRHSP…TEEQGHGGDT (91 aa). Positions 173 to 182 are enriched in polar residues; sequence QAVQQDSATA. 2 stretches are compositionally biased toward low complexity: residues 192–202 and 209–221; these read QAMEQEGATAA and ISQA…ATAA. The NACHT domain maps to 280–602; that stretch reads RTVVLHGKSG…ALYYVLEGLE (323 aa). 286-293 lines the ATP pocket; it reads GKSGIGKS. LRR repeat units lie at residues 704–727, 730–753, 780–803, 809–832, 836–863, 865–892, 893–916, 950–973, 979–1002, 1007–1034, 1036–1059, 1064–1092, and 1121–1142; these read LNSF…SFCL, CPYL…AEAC, HPHL…TLCA, TCKI…LWRI, NRNL…ALKH, KCLL…ILTT, SPSL…PLSD, NRSL…LLCR, HCSL…FLAL, NSWL…VMRE, SCHL…SLSC, SRHL…LKQK, and NRHL…MMKL.

It belongs to the NLRP family. As to quaternary structure, component of the subcortical maternal complex (SCMC), at least composed of NLRP5, KHDC3, OOEP, and TLE6 isoform 1. Within the complex, interacts with OOEP, KHDC3L and TLE6. The SCMC may facilitate translocation of its components between the nuclear and cytoplasmic compartments. As part of the SCMC interacts with the SCMC-associated protein ZBED3. As part of the SCMC interacts with the SCMC-associated protein CFL1/Cofilin-1. Interacts with PRKCE. Interacts with TUBB3 at cytoskeleton microtubules. In terms of processing, phosphorylated by PRKCE. As to expression, expressed in cumulus cells (at protein level). Highly abundant in oocytes and early embryos, however poorly expressed in somatic tissues such as the liver and spinal cord.

The protein resides in the cytoplasm. It is found in the cytoplasmic vesicle. It localises to the secretory vesicle. The protein localises to the cortical granule. Its subcellular location is the mitochondrion. The protein resides in the nucleus. It is found in the nucleolus. It localises to the golgi apparatus. Its function is as follows. Component of the subcortical maternal complex (SCMC), a multiprotein complex that plays a key role in early embryonic development. The SCMC complex is a structural constituent of cytoplasmic lattices, which consist in fibrous structures found in the cytoplasm of oocytes and preimplantation embryos. They are required to store maternal proteins critical for embryonic development, such as proteins that control epigenetic reprogramming of the preimplantation embryo, and prevent their degradation or activation. Required for the localization of cortical granules to the cortex of oocytes, via association with the cortical actin scaffold. Required for cortical actin clearance prior to oocyte exocytosis and prevention of polyspermy. Involved in regulating post-fertilization Ca(2+) release and endoplasmic reticulum storage (ER) storage via regulation of cellular localization. May be involved in the localization of mitochondria to the cytoplasm and perinuclear region in oocytes and early stage embryos, independent of its role in CPL formation. This is NACHT, LRR and PYD domains-containing protein 5 (NLRP5) from Homo sapiens (Human).